The sequence spans 175 residues: uncharacterized protein (175 aa).

Disordered stretches follow at residues 68 to 111 (NKSN…DDDQ) and 154 to 175 (PERAKRESDDEDDMFPIKKLTT). Residues 95 to 106 (EEQPMMPYQQPP) show a composition bias toward low complexity.

It belongs to the asfivirus H171R family.

The protein resides in the virion. This is an uncharacterized protein from African swine fever virus (isolate Pig/Kenya/KEN-50/1950) (ASFV).